A 526-amino-acid polypeptide reads, in one-letter code: Histone-lysine N-methyltransferase SET5 (526 aa).

The 292-residue stretch at A112–V403 folds into the SET domain. The interval N450–K492 is disordered. Positions S476 to K492 are enriched in basic and acidic residues. Phosphoserine is present on S517.

The protein belongs to the class V-like SAM-binding methyltransferase superfamily. Histone-lysine methyltransferase family. SET5 subfamily.

It is found in the nucleus. The protein resides in the chromosome. Its subcellular location is the cytoplasm. It catalyses the reaction L-lysyl-[histone] + S-adenosyl-L-methionine = N(6)-methyl-L-lysyl-[histone] + S-adenosyl-L-homocysteine + H(+). Its function is as follows. Histone methyltransferase that monomethylates 'Lys-5', 'Lys-8' and 'Lys-12' of histone H4 (H4K5me1, H4K8me1 and H4K12me1, respectively), thereby controlling gene expression and remodeling chromatin structures. This Saccharomyces cerevisiae (strain YJM789) (Baker's yeast) protein is Histone-lysine N-methyltransferase SET5 (SET5).